Consider the following 368-residue polypeptide: Guanylate binding protein 128up (368 aa).

The residue at position 22 (Lys22) is a (3S)-3-hydroxylysine. An OBG-type G domain is found at 65–290 (ARVGFVGFPS…LLELMWEYLR (226 aa)). Residues 71 to 78 (GFPSVGKS), 117 to 121 (DLPGI), and 248 to 251 (NKID) contribute to the GTP site. The TGS domain occupies 290–366 (RLQRIYTKPK…NDEDVVQIVK (77 aa)).

The protein belongs to the TRAFAC class OBG-HflX-like GTPase superfamily. OBG GTPase family. In terms of processing, hydroxylated (with S stereochemistry) at C-3 of Lys-22 by JMJD7. As to expression, expressed in posterior-lateral epidermis of the maxillary lobe.

Functionally, catalyzes the conversion of GTP to GDP through hydrolysis of the gamma-phosphate bond in GTP. Dfd/deformed is required to activate 128up in maxillary segment cells. This Drosophila melanogaster (Fruit fly) protein is Guanylate binding protein 128up.